A 104-amino-acid polypeptide reads, in one-letter code: Protamine-2 (104 aa).

Residues 1–91 are disordered; sequence MVRYRMRSPS…RRGCRRSRRR (91 aa). Phosphoserine occurs at positions 8, 10, and 33. Positions 33 to 44 are enriched in basic and acidic residues; that stretch reads SPERVEDYGRTE. A compositionally biased stretch (basic residues) spans 45–91; sequence RGHHHRHRRCKRLHRIHKRRRSCRRRRRHSCRHRRRHRRGCRRSRRR.

This sequence belongs to the protamine P2 family. In terms of assembly, interacts with TDRP. Post-translationally, proteolytic processing into mature chains is required for histone eviction during spermatogenesis. Transition proteins (TNP1 and TNP2) are required for processing. In terms of tissue distribution, testis.

The protein localises to the nucleus. It localises to the chromosome. Protamines substitute for histones in the chromatin of sperm during the haploid phase of spermatogenesis. They compact sperm DNA into a highly condensed, stable and inactive complex. This is Protamine-2 (Prm2) from Rattus norvegicus (Rat).